The following is a 231-amino-acid chain: Large ribosomal subunit protein uL1 (231 aa).

Belongs to the universal ribosomal protein uL1 family. In terms of assembly, part of the 50S ribosomal subunit.

Its function is as follows. Binds directly to 23S rRNA. The L1 stalk is quite mobile in the ribosome, and is involved in E site tRNA release. Protein L1 is also a translational repressor protein, it controls the translation of the L11 operon by binding to its mRNA. This Dechloromonas aromatica (strain RCB) protein is Large ribosomal subunit protein uL1.